The following is a 682-amino-acid chain: Glutamine--fructose-6-phosphate aminotransferase [isomerizing] 2 (682 aa).

The active-site For GATase activity is cysteine 2. Positions cysteine 2–glycine 288 constitute a Glutamine amidotransferase type-2 domain. The residue at position 244 (serine 244) is a Phosphoserine. SIS domains are found at residues histidine 360–serine 499 and leucine 531–proline 672. Substrate-binding positions include threonine 377–serine 378, serine 422–serine 424, threonine 427, and histidine 578.

The catalysed reaction is D-fructose 6-phosphate + L-glutamine = D-glucosamine 6-phosphate + L-glutamate. Its pathway is nucleotide-sugar biosynthesis; UDP-N-acetyl-alpha-D-glucosamine biosynthesis; alpha-D-glucosamine 6-phosphate from D-fructose 6-phosphate: step 1/1. Functionally, controls the flux of glucose into the hexosamine pathway. Most likely involved in regulating the availability of precursors for N- and O-linked glycosylation of proteins. The chain is Glutamine--fructose-6-phosphate aminotransferase [isomerizing] 2 (GFPT2) from Bos taurus (Bovine).